The primary structure comprises 510 residues: Bifunctional purine biosynthesis protein PurH (510 aa).

An MGS-like domain is found at Met-1–Cys-142.

Belongs to the PurH family.

The catalysed reaction is (6R)-10-formyltetrahydrofolate + 5-amino-1-(5-phospho-beta-D-ribosyl)imidazole-4-carboxamide = 5-formamido-1-(5-phospho-D-ribosyl)imidazole-4-carboxamide + (6S)-5,6,7,8-tetrahydrofolate. It carries out the reaction IMP + H2O = 5-formamido-1-(5-phospho-D-ribosyl)imidazole-4-carboxamide. It functions in the pathway purine metabolism; IMP biosynthesis via de novo pathway; 5-formamido-1-(5-phospho-D-ribosyl)imidazole-4-carboxamide from 5-amino-1-(5-phospho-D-ribosyl)imidazole-4-carboxamide (10-formyl THF route): step 1/1. It participates in purine metabolism; IMP biosynthesis via de novo pathway; IMP from 5-formamido-1-(5-phospho-D-ribosyl)imidazole-4-carboxamide: step 1/1. The protein is Bifunctional purine biosynthesis protein PurH of Campylobacter jejuni subsp. jejuni serotype O:2 (strain ATCC 700819 / NCTC 11168).